The primary structure comprises 322 residues: Probable manganese-dependent inorganic pyrophosphatase (322 aa).

Mn(2+) is bound by residues His-10, Asp-14, Asp-16, Asp-86, His-108, and Asp-160.

This sequence belongs to the PPase class C family. It depends on Mn(2+) as a cofactor.

The protein localises to the cytoplasm. The catalysed reaction is diphosphate + H2O = 2 phosphate + H(+). The protein is Probable manganese-dependent inorganic pyrophosphatase (ppaC) of Archaeoglobus fulgidus (strain ATCC 49558 / DSM 4304 / JCM 9628 / NBRC 100126 / VC-16).